The sequence spans 408 residues: Peptidase T (408 aa).

His-78 contacts Zn(2+). The active site involves Asp-80. A Zn(2+)-binding site is contributed by Asp-140. Glu-173 serves as the catalytic Proton acceptor. Residues Glu-174, Asp-196, and His-379 each coordinate Zn(2+).

The protein belongs to the peptidase M20B family. Zn(2+) serves as cofactor.

The protein localises to the cytoplasm. The catalysed reaction is Release of the N-terminal residue from a tripeptide.. In terms of biological role, cleaves the N-terminal amino acid of tripeptides. The polypeptide is Peptidase T (Escherichia coli O6:K15:H31 (strain 536 / UPEC)).